The primary structure comprises 219 residues: Protein-methionine-sulfoxide reductase heme-binding subunit MsrQ (219 aa).

Transmembrane regions (helical) follow at residues 17 to 37 (AKPL…YAAW), 88 to 108 (LFAY…DMGF), 121 to 141 (PFIL…ATSF), 153 to 173 (WQLL…HFFW), and 184 to 204 (VFVY…NHWA).

Belongs to the MsrQ family. As to quaternary structure, heterodimer of a catalytic subunit (MsrP) and a heme-binding subunit (MsrQ). FMN is required as a cofactor. Heme b serves as cofactor.

The protein resides in the cell inner membrane. Part of the MsrPQ system that repairs oxidized periplasmic proteins containing methionine sulfoxide residues (Met-O), using respiratory chain electrons. Thus protects these proteins from oxidative-stress damage caused by reactive species of oxygen and chlorine generated by the host defense mechanisms. MsrPQ is essential for the maintenance of envelope integrity under bleach stress, rescuing a wide series of structurally unrelated periplasmic proteins from methionine oxidation. MsrQ provides electrons for reduction to the reductase catalytic subunit MsrP, using the quinone pool of the respiratory chain. The chain is Protein-methionine-sulfoxide reductase heme-binding subunit MsrQ from Polaromonas naphthalenivorans (strain CJ2).